The following is an 800-amino-acid chain: Leukocyte receptor cluster member 8 homolog (800 aa).

5 disordered regions span residues 118–149, 175–229, 245–273, 335–394, and 407–519; these read NYQS…MSYS, PCIQ…GFKF, SSEH…PQQQ, TIDW…GRGS, and KESS…HGHG. 2 stretches are compositionally biased toward low complexity: residues 120-131 and 184-201; these read QSMSSQSGQHQG and NQSN…SQQS. Positions 252 to 261 are enriched in polar residues; sequence SAGQQQQQAT. The segment covering 338–352 has biased composition (basic and acidic residues); that stretch reads WSREPLPGKDGGKES. Polar residues predominate over residues 360–387; it reads QTTLQTSHGSTITITQSPRGGGNSTNAA. Residues 409–418 show a composition bias toward low complexity; sequence SSSSSSAGSR. 2 stretches are compositionally biased toward basic residues: residues 419–433 and 508–519; these read SRSR…RRYR and EKRAARFQHGHG. Positions 636 to 800 constitute a PCI domain; that stretch reads DHEEFNQCQA…KLSLAVLPNI (165 aa).

The chain is Leukocyte receptor cluster member 8 homolog (leng8) from Xenopus laevis (African clawed frog).